Consider the following 434-residue polypeptide: Neuropeptide receptor 22 (434 aa).

The Extracellular portion of the chain corresponds to 1–55 (MDEGGGIGSSLLSRITTTASEIMMRNEPTTTENPAVQEMNHIYHLTPSMKMLCIL). A helical membrane pass occupies residues 56–76 (FYSILCVCCVYGNVLVILVIV). The Cytoplasmic portion of the chain corresponds to 77–86 (YFKRLRTATN). Residues 87–107 (ILILNLAVADLLISVFCIPFS) traverse the membrane as a helical segment. Over 108 to 128 (YWQVLIYDDQRWLFGSMMCSL) the chain is Extracellular. Cysteine 126 and cysteine 204 are joined by a disulfide. The helical transmembrane segment at 129 to 149 (LAFLQAMAVFLSAWTLVVISF) threads the bilayer. The Cytoplasmic portion of the chain corresponds to 150-169 (DRWMAIMFLLTPNIRITRRR). Residues 170–190 (ALYLVAATWIFSILMALPLLF) traverse the membrane as a helical segment. Over 191 to 226 (TTRFFEDQDGLPNCGENWTYFGDSGEQVRKVYSSMV) the chain is Extracellular. A glycan (N-linked (GlcNAc...) asparagine) is linked at asparagine 207. A helical membrane pass occupies residues 227–247 (LILQYVVPQAVLIITYTHIGI). Topologically, residues 248-277 (KMWNSRVPGMQNGATKKMIVDRHESVKKLV) are cytoplasmic. Residues 278-298 (PMVILISALFALCWLPLLILI) traverse the membrane as a helical segment. Over 299–310 (NVIPEFYPDINS) the chain is Extracellular. A helical transmembrane segment spans residues 311–331 (WGYILYLWWFAHGLAMSHSMV). Residues 332–434 (NPIIYFIRNA…VRNNSANSLA (103 aa)) are Cytoplasmic-facing.

Belongs to the G-protein coupled receptor 1 family. As to expression, expressed in many cells, mainly in the head region, with expression detected in the head muscles, I2 neurons, MC neurons, RIH neuron, AIA neurons, AUA neurons, ASK neurons, ASI neurons, a few B-type motorneurons in the posterior ventral nerve cord, pharyngeal muscles, body wall muscles, the intestine and a few classes of unidentified cells anterior to the nerve ring. Expression in the MC neurons is important to mediate suppression of feeding while expression in the RIH neuron is important for the facilitation of egg-laying. No expression detected in other tissues including hypodermis.

The protein localises to the cell membrane. Receptor for the LURY-1-1 and LURY-1-2 peptides which control food-related processes including feeding, lifespan, egg-laying and roaming behavior. Receptor for flp-7 which stimulates serotonin-induced fat loss. Serotonin induces secretion of flp-7 from neurons and binding to npr-22 which leads to induction of the atgp-1 lipase and subsequent fat loss. Acts in vitro as a receptor for the flp-7 FMRFamide-like neuropeptides TPMQRSSMVRF-amide, SPMQRSSMVRF-amide, SPMERSAMVRF-amide and SPMDRSKMVRF-amide. Also acts in vitro as a receptor for a number of other FMRFamide-like neuropeptides including the flp-1 neuropeptide PNFMRY-amide, the flp-9 neuropeptide KPSFVRF-amide, the flp-11 neuropeptides AMRNALVRF-amide, ASGGMRNALVRF-amide and NGAPQPFVRF-amide, the flp-13 neuropeptides AADGAPLIRF-amide, ASPSAPLIRF-amide, SPSAVPLIRF-amide, SAAAPLIRF-amide and ASSAPLIRF-amide, and the flp-22 neuropeptide SPSAKWMRF-amide. The SPMERSAMVRF-amide neuropeptide from flp-7 acts as the strongest in vitro activator of npr-22. This is Neuropeptide receptor 22 from Caenorhabditis elegans.